Reading from the N-terminus, the 393-residue chain is Chalcone synthase G (393 aa).

Residue Cys164 is part of the active site.

It belongs to the thiolase-like superfamily. Chalcone/stilbene synthases family. As to expression, expressed in seedlings after illumination with UV light. No expression detectable in flowers. It is not known for sure whether CHSG encodes a chalcone synthase or a very closely related condensing enzyme.

The enzyme catalyses (E)-4-coumaroyl-CoA + 3 malonyl-CoA + 3 H(+) = 2',4,4',6'-tetrahydroxychalcone + 3 CO2 + 4 CoA. It participates in secondary metabolite biosynthesis; flavonoid biosynthesis. Functionally, the primary product of this enzyme is 4,2',4',6'-tetrahydroxychalcone (also termed naringenin-chalcone or chalcone) which can under specific conditions spontaneously isomerize into naringenin. The protein is Chalcone synthase G (CHSG) of Petunia hybrida (Petunia).